Here is a 184-residue protein sequence, read N- to C-terminus: ATP synthase subunit b, chloroplastic (184 aa).

A helical transmembrane segment spans residues 29–49 (INLINLILVLGILFYYGKGVL).

Belongs to the ATPase B chain family. As to quaternary structure, F-type ATPases have 2 components, F(1) - the catalytic core - and F(0) - the membrane proton channel. F(1) has five subunits: alpha(3), beta(3), gamma(1), delta(1), epsilon(1). F(0) has four main subunits: a(1), b(1), b'(1) and c(10-14). The alpha and beta chains form an alternating ring which encloses part of the gamma chain. F(1) is attached to F(0) by a central stalk formed by the gamma and epsilon chains, while a peripheral stalk is formed by the delta, b and b' chains.

It is found in the plastid. It localises to the chloroplast thylakoid membrane. Its function is as follows. F(1)F(0) ATP synthase produces ATP from ADP in the presence of a proton or sodium gradient. F-type ATPases consist of two structural domains, F(1) containing the extramembraneous catalytic core and F(0) containing the membrane proton channel, linked together by a central stalk and a peripheral stalk. During catalysis, ATP synthesis in the catalytic domain of F(1) is coupled via a rotary mechanism of the central stalk subunits to proton translocation. In terms of biological role, component of the F(0) channel, it forms part of the peripheral stalk, linking F(1) to F(0). In Adiantum capillus-veneris (Maidenhair fern), this protein is ATP synthase subunit b, chloroplastic.